The primary structure comprises 292 residues: Acidic endochitinase (292 aa).

Positions 1–25 (MAAHKITTTLSIFFLLSSIFRSSDA) are cleaved as a signal peptide. In terms of domain architecture, GH18 spans 26–292 (AGIAIYWGQN…YSDSIKGSIG (267 aa)). 2 disulfides stabilise this stretch: C45-C92 and C75-C82. E152 acts as the Proton donor in catalysis. C180 and C209 are disulfide-bonded.

Belongs to the glycosyl hydrolase 18 family. Chitinase class II subfamily.

The protein localises to the secreted. It is found in the extracellular space. It catalyses the reaction Random endo-hydrolysis of N-acetyl-beta-D-glucosaminide (1-&gt;4)-beta-linkages in chitin and chitodextrins.. Its function is as follows. This protein functions as a defense against chitin containing fungal pathogens. This Cucumis sativus (Cucumber) protein is Acidic endochitinase.